The sequence spans 643 residues: E3 ubiquitin-protein ligase Praja-1 (643 aa).

A disordered region spans residues 1–363 (MGQESSKPVW…SDDYYKYCDE (363 aa)). Composition is skewed to basic and acidic residues over residues 95 to 105 (DYSRYPPREYR), 145 to 158 (KFKD…EKGA), and 173 to 183 (RDVREERDKLD). The span at 200-209 (QSSVASQSSS) shows a compositional bias: low complexity. A compositionally biased stretch (basic and acidic residues) spans 213 to 227 (LATKGDSSERERREQ). Serine 265 is modified (phosphoserine). Threonine 277 carries the phosphothreonine modification. 2 stretches are compositionally biased toward basic and acidic residues: residues 289–310 (RWRD…RGRG) and 320–362 (KYPE…KYCD). Phosphoserine is present on residues serine 365 and serine 367. The interval 380–454 (RSREQTLSSS…REPSLQEEQA (75 aa)) is disordered. Residues 410–439 (SASTGTSPGPGASASAGAGAGASAGSNGSN) are compositionally biased toward low complexity. An RING-type zinc finger spans residues 595–636 (CPICCSEYVKGEVATELPCHHYFHKPCVSIWLQKSGTCPVCR).

In terms of assembly, binds ubiquitin-conjugating enzymes (E2s). In vitro, interacts with the ubiquitin-conjugating enzyme, UBE2D2. Substrate for E2-dependent ubiquitination. In terms of tissue distribution, expressed in various regions of the brain including the cerebellum, cerebral cortex, medulla, occipital pole, frontal lobe, temporal lobe and putamen. Highest levels in the cerebral cortex.

The enzyme catalyses S-ubiquitinyl-[E2 ubiquitin-conjugating enzyme]-L-cysteine + [acceptor protein]-L-lysine = [E2 ubiquitin-conjugating enzyme]-L-cysteine + N(6)-ubiquitinyl-[acceptor protein]-L-lysine.. Functionally, has E2-dependent E3 ubiquitin-protein ligase activity. Ubiquitinates MAGED1 antigen leading to its subsequent degradation by proteasome. May be involved in protein sorting. The protein is E3 ubiquitin-protein ligase Praja-1 (PJA1) of Homo sapiens (Human).